The chain runs to 608 residues: Probable potassium transport system protein Kup (608 aa).

A run of 12 helical transmembrane segments spans residues 9–29 (LSGV…TSPL), 46–66 (PAAI…VVSV), 99–119 (TPVL…EVVI), 137–157 (PSLD…LFAI), 165–185 (VGKL…VLGL), 213–233 (TSFF…ALYA), 247–267 (WFVV…ALLL), 285–305 (ALLP…QAVI), 337–357 (IYIP…IMSF), 363–383 (LAAA…ILFC), 396–416 (LVAA…AANL), and 419–439 (IFSG…LMTS).

It belongs to the HAK/KUP transporter (TC 2.A.72) family.

Its subcellular location is the cell inner membrane. It carries out the reaction K(+)(in) + H(+)(in) = K(+)(out) + H(+)(out). Its function is as follows. Transport of potassium into the cell. Likely operates as a K(+):H(+) symporter. This Aeromonas salmonicida (strain A449) protein is Probable potassium transport system protein Kup.